Consider the following 576-residue polypeptide: Aspartate--tRNA ligase (576 aa).

Residue E173 participates in L-aspartate binding. An aspartate region spans residues 197 to 200 (QLFK). R219 lines the L-aspartate pocket. Residues 219–221 (RDE) and Q228 contribute to the ATP site. Position 438 (H438) interacts with L-aspartate. E470 serves as a coordination point for ATP. R477 lines the L-aspartate pocket. ATP is bound at residue 522-525 (GLDR).

This sequence belongs to the class-II aminoacyl-tRNA synthetase family. Type 1 subfamily. As to quaternary structure, homodimer.

It is found in the cytoplasm. It catalyses the reaction tRNA(Asp) + L-aspartate + ATP = L-aspartyl-tRNA(Asp) + AMP + diphosphate. Functionally, catalyzes the attachment of L-aspartate to tRNA(Asp) in a two-step reaction: L-aspartate is first activated by ATP to form Asp-AMP and then transferred to the acceptor end of tRNA(Asp). The polypeptide is Aspartate--tRNA ligase (Aster yellows witches'-broom phytoplasma (strain AYWB)).